We begin with the raw amino-acid sequence, 366 residues long: Anhydro-N-acetylmuramic acid kinase (366 aa).

12-19 provides a ligand contact to ATP; that stretch reads GTSLDGID.

This sequence belongs to the anhydro-N-acetylmuramic acid kinase family.

It carries out the reaction 1,6-anhydro-N-acetyl-beta-muramate + ATP + H2O = N-acetyl-D-muramate 6-phosphate + ADP + H(+). It functions in the pathway amino-sugar metabolism; 1,6-anhydro-N-acetylmuramate degradation. Its pathway is cell wall biogenesis; peptidoglycan recycling. Functionally, catalyzes the specific phosphorylation of 1,6-anhydro-N-acetylmuramic acid (anhMurNAc) with the simultaneous cleavage of the 1,6-anhydro ring, generating MurNAc-6-P. Is required for the utilization of anhMurNAc either imported from the medium or derived from its own cell wall murein, and thus plays a role in cell wall recycling. In Nitrosospira multiformis (strain ATCC 25196 / NCIMB 11849 / C 71), this protein is Anhydro-N-acetylmuramic acid kinase.